Reading from the N-terminus, the 425-residue chain is Nuclear pore complex-interacting protein family member B6 (425 aa).

The interval S332–H414 is disordered. Basic and acidic residues predominate over residues E353–E395. Positions K401–H414 are enriched in basic residues.

Belongs to the NPIP family.

The sequence is that of Nuclear pore complex-interacting protein family member B6 (NPIPB6) from Homo sapiens (Human).